A 231-amino-acid chain; its full sequence is 5'-methylthioadenosine/S-adenosylhomocysteine nucleosidase (231 aa).

Catalysis depends on Glu-12, which acts as the Proton acceptor. Residues Gly-78, Ile-153, and 174-175 (ME) each bind substrate. Catalysis depends on Asp-198, which acts as the Proton donor.

Belongs to the PNP/UDP phosphorylase family. MtnN subfamily.

The catalysed reaction is S-adenosyl-L-homocysteine + H2O = S-(5-deoxy-D-ribos-5-yl)-L-homocysteine + adenine. It carries out the reaction S-methyl-5'-thioadenosine + H2O = 5-(methylsulfanyl)-D-ribose + adenine. It catalyses the reaction 5'-deoxyadenosine + H2O = 5-deoxy-D-ribose + adenine. It functions in the pathway amino-acid biosynthesis; L-methionine biosynthesis via salvage pathway; S-methyl-5-thio-alpha-D-ribose 1-phosphate from S-methyl-5'-thioadenosine (hydrolase route): step 1/2. Functionally, catalyzes the irreversible cleavage of the glycosidic bond in both 5'-methylthioadenosine (MTA) and S-adenosylhomocysteine (SAH/AdoHcy) to adenine and the corresponding thioribose, 5'-methylthioribose and S-ribosylhomocysteine, respectively. Also cleaves 5'-deoxyadenosine, a toxic by-product of radical S-adenosylmethionine (SAM) enzymes, into 5-deoxyribose and adenine. The polypeptide is 5'-methylthioadenosine/S-adenosylhomocysteine nucleosidase (Maridesulfovibrio salexigens (strain ATCC 14822 / DSM 2638 / NCIMB 8403 / VKM B-1763) (Desulfovibrio salexigens)).